A 594-amino-acid polypeptide reads, in one-letter code: 3-hydroxy-3-methylglutaryl coenzyme A reductase 2-A (594 aa).

The interval 1–32 (MDVRRRPVKSLSSAKTATAGEPPKSQQQHPKA) is disordered. Topologically, residues 1–37 (MDVRRRPVKSLSSAKTATAGEPPKSQQQHPKASDALP) are lumenal. Residues 38–58 (LPLYLTNGLFFTMFFSVMYFL) traverse the membrane as a helical segment. Residues 59–81 (LHRWREKIRNSTPLHVVTLSELA) lie on the Cytoplasmic side of the membrane. A helical transmembrane segment spans residues 82-102 (ALVLLMASVIYLLGFFGIGFV). Over 103-549 (RSVIRPSPDA…SKESPGSNSR (447 aa)) the chain is Lumenal. N261 carries N-linked (GlcNAc...) asparagine glycosylation. E273 functions as the Charge relay system in the catalytic mechanism. N337 carries N-linked (GlcNAc...) asparagine glycosylation. Active-site charge relay system residues include K405 and D481. Residues 550–570 (LLASIVAGSVLAGELSLMSAL) traverse the membrane as a helical segment. The Cytoplasmic segment spans residues 571-594 (AAGQLVKSHMKYNRSSKDITKLSS). H579 functions as the Proton donor in the catalytic mechanism.

This sequence belongs to the HMG-CoA reductase family. Mostly expressed in the petioles of seedlings, seedlings and roots, and, to a lower extent, in seeds, leaves, stems and flowers.

It localises to the endoplasmic reticulum membrane. The protein localises to the plastid. The protein resides in the chloroplast membrane. Its subcellular location is the peroxisome membrane. It catalyses the reaction (R)-mevalonate + 2 NADP(+) + CoA = (3S)-3-hydroxy-3-methylglutaryl-CoA + 2 NADPH + 2 H(+). Its pathway is metabolic intermediate biosynthesis; (R)-mevalonate biosynthesis; (R)-mevalonate from acetyl-CoA: step 3/3. Its activity is regulated as follows. Competitive inhibition by mevinolin (Mev) is leading to a significant reduction of total ginsenoside in adventitious roots. Triggered by darkness. Functionally, catalyzes the synthesis of mevalonate, the specific precursor of all isoprenoid compounds present in plants. Component of the triterpene saponins (e.g. ginsenosides or panaxosides) and phytosterols biosynthetic pathways. The protein is 3-hydroxy-3-methylglutaryl coenzyme A reductase 2-A of Panax ginseng (Korean ginseng).